The chain runs to 263 residues: Hydroxyacylglutathione hydrolase (263 aa).

7 residues coordinate Zn(2+): His-56, His-58, Asp-60, His-61, His-115, Asp-135, and His-175.

Belongs to the metallo-beta-lactamase superfamily. Glyoxalase II family. Monomer. Zn(2+) serves as cofactor.

It carries out the reaction an S-(2-hydroxyacyl)glutathione + H2O = a 2-hydroxy carboxylate + glutathione + H(+). It participates in secondary metabolite metabolism; methylglyoxal degradation; (R)-lactate from methylglyoxal: step 2/2. In terms of biological role, thiolesterase that catalyzes the hydrolysis of S-D-lactoyl-glutathione to form glutathione and D-lactic acid. This is Hydroxyacylglutathione hydrolase from Nitrosococcus oceani (strain ATCC 19707 / BCRC 17464 / JCM 30415 / NCIMB 11848 / C-107).